The following is a 633-amino-acid chain: Chaperone protein HtpG (633 aa).

The a; substrate-binding stretch occupies residues methionine 1 to arginine 341. Residues glutamate 342–arginine 562 are b. A c region spans residues leucine 563–alanine 633.

Belongs to the heat shock protein 90 family. In terms of assembly, homodimer.

It localises to the cytoplasm. Its function is as follows. Molecular chaperone. Has ATPase activity. The sequence is that of Chaperone protein HtpG from Cupriavidus taiwanensis (strain DSM 17343 / BCRC 17206 / CCUG 44338 / CIP 107171 / LMG 19424 / R1) (Ralstonia taiwanensis (strain LMG 19424)).